A 183-amino-acid chain; its full sequence is Probable chorismate pyruvate-lyase (183 aa).

Residues Arg-79, Leu-115, and Glu-168 each contribute to the substrate site.

Belongs to the UbiC family.

It localises to the cytoplasm. The enzyme catalyses chorismate = 4-hydroxybenzoate + pyruvate. It participates in cofactor biosynthesis; ubiquinone biosynthesis. Functionally, removes the pyruvyl group from chorismate, with concomitant aromatization of the ring, to provide 4-hydroxybenzoate (4HB) for the ubiquinone pathway. The chain is Probable chorismate pyruvate-lyase from Chromohalobacter salexigens (strain ATCC BAA-138 / DSM 3043 / CIP 106854 / NCIMB 13768 / 1H11).